We begin with the raw amino-acid sequence, 456 residues long: Methylenetetrahydrofolate--tRNA-(uracil-5-)-methyltransferase TrmFO (456 aa).

11–16 (GAGLAG) is a binding site for FAD.

Belongs to the MnmG family. TrmFO subfamily. It depends on FAD as a cofactor.

It localises to the cytoplasm. It catalyses the reaction uridine(54) in tRNA + (6R)-5,10-methylene-5,6,7,8-tetrahydrofolate + NADH + H(+) = 5-methyluridine(54) in tRNA + (6S)-5,6,7,8-tetrahydrofolate + NAD(+). The enzyme catalyses uridine(54) in tRNA + (6R)-5,10-methylene-5,6,7,8-tetrahydrofolate + NADPH + H(+) = 5-methyluridine(54) in tRNA + (6S)-5,6,7,8-tetrahydrofolate + NADP(+). Its function is as follows. Catalyzes the folate-dependent formation of 5-methyl-uridine at position 54 (M-5-U54) in all tRNAs. This Synechococcus sp. (strain CC9605) protein is Methylenetetrahydrofolate--tRNA-(uracil-5-)-methyltransferase TrmFO.